The sequence spans 438 residues: 2-(3-amino-3-carboxypropyl)histidine synthase subunit 1 (438 aa).

The disordered stretch occupies residues 1-24 (MAALVVSETAEPGSRVGPGRGRIS). [4Fe-4S] cluster contacts are provided by Cys110, Cys214, and Cys342. A disordered region spans residues 402 to 438 (LCQPASDKVQQGSRGGSPAPACESCNCADQKATSPAP). A Phosphoserine modification is found at Ser418.

Belongs to the DPH1/DPH2 family. DPH1 subfamily. Component of the 2-(3-amino-3-carboxypropyl)histidine synthase complex composed of DPH1, DPH2, DPH3 and a NADH-dependent reductase. Interacts with DPH2. Interacts with RBM8A. The cofactor is [4Fe-4S] cluster. Strongly expressed in kidney and liver. Moderately expressed in brain, skin and testis. Weakly expressed in heart, lung, small intestine, spleen, stomach and thymus.

The protein localises to the nucleus. It is found in the cytoplasm. It carries out the reaction L-histidyl-[translation elongation factor 2] + S-adenosyl-L-methionine = 2-[(3S)-amino-3-carboxypropyl]-L-histidyl-[translation elongation factor 2] + S-methyl-5'-thioadenosine + H(+). It functions in the pathway protein modification; peptidyl-diphthamide biosynthesis. Catalyzes the first step of diphthamide biosynthesis, a post-translational modification of histidine which occurs in elongation factor 2. DPH1 and DPH2 transfer a 3-amino-3-carboxypropyl (ACP) group from S-adenosyl-L-methionine (SAM) to a histidine residue, the reaction is assisted by a reduction system comprising DPH3 and a NADH-dependent reductase. Acts as a tumor suppressor. This Mus musculus (Mouse) protein is 2-(3-amino-3-carboxypropyl)histidine synthase subunit 1.